The chain runs to 292 residues: Phosphatidylserine decarboxylase proenzyme (292 aa).

Residues Asp98, His153, and Ser254 each act as charge relay system; for autoendoproteolytic cleavage activity in the active site. Ser254 functions as the Schiff-base intermediate with substrate; via pyruvic acid; for decarboxylase activity in the catalytic mechanism. Pyruvic acid (Ser); by autocatalysis is present on Ser254.

This sequence belongs to the phosphatidylserine decarboxylase family. PSD-B subfamily. Prokaryotic type I sub-subfamily. As to quaternary structure, heterodimer of a large membrane-associated beta subunit and a small pyruvoyl-containing alpha subunit. The cofactor is pyruvate. In terms of processing, is synthesized initially as an inactive proenzyme. Formation of the active enzyme involves a self-maturation process in which the active site pyruvoyl group is generated from an internal serine residue via an autocatalytic post-translational modification. Two non-identical subunits are generated from the proenzyme in this reaction, and the pyruvate is formed at the N-terminus of the alpha chain, which is derived from the carboxyl end of the proenzyme. The autoendoproteolytic cleavage occurs by a canonical serine protease mechanism, in which the side chain hydroxyl group of the serine supplies its oxygen atom to form the C-terminus of the beta chain, while the remainder of the serine residue undergoes an oxidative deamination to produce ammonia and the pyruvoyl prosthetic group on the alpha chain. During this reaction, the Ser that is part of the protease active site of the proenzyme becomes the pyruvoyl prosthetic group, which constitutes an essential element of the active site of the mature decarboxylase.

Its subcellular location is the cell membrane. The catalysed reaction is a 1,2-diacyl-sn-glycero-3-phospho-L-serine + H(+) = a 1,2-diacyl-sn-glycero-3-phosphoethanolamine + CO2. The protein operates within phospholipid metabolism; phosphatidylethanolamine biosynthesis; phosphatidylethanolamine from CDP-diacylglycerol: step 2/2. Functionally, catalyzes the formation of phosphatidylethanolamine (PtdEtn) from phosphatidylserine (PtdSer). In Halorhodospira halophila (strain DSM 244 / SL1) (Ectothiorhodospira halophila (strain DSM 244 / SL1)), this protein is Phosphatidylserine decarboxylase proenzyme.